The chain runs to 335 residues: Anthranilate phosphoribosyltransferase (335 aa).

5-phospho-alpha-D-ribose 1-diphosphate-binding positions include glycine 82, 85 to 86, threonine 90, 92 to 95, 110 to 118, and serine 122; these read GD, NIST, and KHGGRSVSS. Glycine 82 provides a ligand contact to anthranilate. Serine 94 contacts Mg(2+). Arginine 168 contributes to the anthranilate binding site. Positions 226 and 227 each coordinate Mg(2+).

It belongs to the anthranilate phosphoribosyltransferase family. In terms of assembly, homodimer. Requires Mg(2+) as cofactor.

It carries out the reaction N-(5-phospho-beta-D-ribosyl)anthranilate + diphosphate = 5-phospho-alpha-D-ribose 1-diphosphate + anthranilate. It functions in the pathway amino-acid biosynthesis; L-tryptophan biosynthesis; L-tryptophan from chorismate: step 2/5. In terms of biological role, catalyzes the transfer of the phosphoribosyl group of 5-phosphorylribose-1-pyrophosphate (PRPP) to anthranilate to yield N-(5'-phosphoribosyl)-anthranilate (PRA). The sequence is that of Anthranilate phosphoribosyltransferase from Francisella philomiragia subsp. philomiragia (strain ATCC 25017 / CCUG 19701 / FSC 153 / O#319-036).